We begin with the raw amino-acid sequence, 357 residues long: 3-isopropylmalate dehydrogenase (357 aa).

The substrate site is built by Arg97, Arg107, Arg135, and Asp224. 3 residues coordinate Mg(2+): Asp224, Asp248, and Asp252. Residue 282 to 294 (GSAPDIAGQDKAN) coordinates NAD(+).

The protein belongs to the isocitrate and isopropylmalate dehydrogenases family. LeuB type 1 subfamily. As to quaternary structure, homodimer. The cofactor is Mg(2+). Requires Mn(2+) as cofactor.

Its subcellular location is the cytoplasm. The catalysed reaction is (2R,3S)-3-isopropylmalate + NAD(+) = 4-methyl-2-oxopentanoate + CO2 + NADH. Its pathway is amino-acid biosynthesis; L-leucine biosynthesis; L-leucine from 3-methyl-2-oxobutanoate: step 3/4. Its function is as follows. Catalyzes the oxidation of 3-carboxy-2-hydroxy-4-methylpentanoate (3-isopropylmalate) to 3-carboxy-4-methyl-2-oxopentanoate. The product decarboxylates to 4-methyl-2 oxopentanoate. The protein is 3-isopropylmalate dehydrogenase of Parasynechococcus marenigrum (strain WH8102).